The chain runs to 351 residues: Porphobilinogen deaminase (351 aa).

An S-(dipyrrolylmethanemethyl)cysteine modification is found at C242. Residues P257–S306 enclose the RPE1 insert domain.

Belongs to the HMBS family. Monomer. Dipyrromethane serves as cofactor.

It carries out the reaction 4 porphobilinogen + H2O = hydroxymethylbilane + 4 NH4(+). It participates in porphyrin-containing compound metabolism; protoporphyrin-IX biosynthesis; coproporphyrinogen-III from 5-aminolevulinate: step 2/4. Its function is as follows. Tetrapolymerization of the monopyrrole PBG into the hydroxymethylbilane pre-uroporphyrinogen in several discrete steps. The chain is Porphobilinogen deaminase from Rickettsia conorii (strain ATCC VR-613 / Malish 7).